A 129-amino-acid polypeptide reads, in one-letter code: Follitropin subunit beta (129 aa).

Residues 1–20 (MKSVQFCFLFCCWRAICCRS) form the signal peptide. 6 cysteine pairs are disulfide-bonded: cysteine 21-cysteine 69, cysteine 35-cysteine 84, cysteine 38-cysteine 122, cysteine 46-cysteine 100, cysteine 50-cysteine 102, and cysteine 105-cysteine 112. N-linked (GlcNAc...) asparagine glycans are attached at residues asparagine 25 and asparagine 42.

Belongs to the glycoprotein hormones subunit beta family. As to quaternary structure, heterodimer. The active follitropin is a heterodimer composed of an alpha chain/CGA shared with other hormones and a unique beta chain/FSHB shown here.

Its subcellular location is the secreted. Functionally, together with the alpha chain CGA constitutes follitropin, the follicle-stimulating hormone, and provides its biological specificity to the hormone heterodimer. Binds FSHR, a G protein-coupled receptor, on target cells to activate downstream signaling pathways. Follitropin is involved in follicle development and spermatogenesis in reproductive organs. The protein is Follitropin subunit beta (FSHB) of Bubalus bubalis (Domestic water buffalo).